Here is a 423-residue protein sequence, read N- to C-terminus: UPF0229 protein PSPA7_0730 (423 aa).

The tract at residues 84–107 is disordered; sequence AGEHIARPSGGGGGRGGGKASNSG. Residues 92-102 show a composition bias toward gly residues; sequence SGGGGGRGGGK.

The protein belongs to the UPF0229 family.

This Pseudomonas paraeruginosa (strain DSM 24068 / PA7) (Pseudomonas aeruginosa (strain PA7)) protein is UPF0229 protein PSPA7_0730.